An 817-amino-acid polypeptide reads, in one-letter code: tRNA(Met) cytidine acetyltransferase TmcA (817 aa).

ATP-binding positions include glutamine 265, 289–298 (GRGKSVSVGI), and arginine 439. One can recognise an N-acetyltransferase domain in the interval 469-664 (ELIRKMEVYL…YTAIVIKPIS (196 aa)). Acetyl-CoA-binding positions include 589–591 (IAT), 596–602 (MDLGLGS), glutamate 629, and arginine 636.

The protein belongs to the RNA cytidine acetyltransferase family. TmcA subfamily.

The protein resides in the cytoplasm. It catalyses the reaction cytidine(34) in elongator tRNA(Met) + acetyl-CoA + ATP + H2O = N(4)-acetylcytidine(34) in elongator tRNA(Met) + ADP + phosphate + CoA + H(+). It carries out the reaction a cytidine in RNA + acetyl-CoA + ATP + H2O = an N(4)-acetylcytidine in RNA + ADP + phosphate + CoA + H(+). The enzyme catalyses a cytidine in tRNA + acetyl-CoA + ATP + H2O = an N(4)-acetylcytidine in tRNA + ADP + phosphate + CoA + H(+). The catalysed reaction is a cytidine in mRNA + acetyl-CoA + ATP + H2O = an N(4)-acetylcytidine in mRNA + ADP + phosphate + CoA + H(+). Catalyzes the formation of N(4)-acetylcytidine (ac(4)C) at the wobble position of tRNA(Met), by using acetyl-CoA as an acetyl donor and ATP (or GTP). Functionally, catalyzes the formation of N(4)-acetylcytidine (ac(4)C) sites in rRNA, tRNA, mRNA and non-coding (nc) RNA, almost always on the middle C of a CCG motif. In hyperthermophiles more acetylation is seen at higher temperatures. The protein is tRNA(Met) cytidine acetyltransferase TmcA of Pyrococcus abyssi (strain GE5 / Orsay).